A 226-amino-acid polypeptide reads, in one-letter code: Probable transaldolase (226 aa).

Lysine 91 acts as the Schiff-base intermediate with substrate in catalysis.

This sequence belongs to the transaldolase family. Type 3B subfamily.

The protein resides in the cytoplasm. The enzyme catalyses D-sedoheptulose 7-phosphate + D-glyceraldehyde 3-phosphate = D-erythrose 4-phosphate + beta-D-fructose 6-phosphate. It participates in carbohydrate degradation; pentose phosphate pathway; D-glyceraldehyde 3-phosphate and beta-D-fructose 6-phosphate from D-ribose 5-phosphate and D-xylulose 5-phosphate (non-oxidative stage): step 2/3. In terms of biological role, transaldolase is important for the balance of metabolites in the pentose-phosphate pathway. The polypeptide is Probable transaldolase (Chlorobium phaeobacteroides (strain DSM 266 / SMG 266 / 2430)).